A 141-amino-acid chain; its full sequence is Translation initiation factor IF-1, chloroplastic (141 aa).

A chloroplast-targeting transit peptide spans 1 to 46 (MLQLCSTFRPQLLLPCQFRFTNGVLIPQINYVASNSVVNIRPMIRC). A disordered region spans residues 49–69 (ASGGRGGANRSKPAKPQVKEG). Positions 63–138 (KPQVKEGSNK…TKGRIIFRMS (76 aa)) constitute an S1-like domain.

This sequence belongs to the IF-1 family. As to quaternary structure, component of the 30S ribosomal translation pre-initiation complex which assembles on the 30S ribosome in the order IF-2 and IF-3, IF-1 and N-formylmethionyl-tRNA(fMet); mRNA recruitment can occur at any time during PIC assembly.

It localises to the plastid. It is found in the chloroplast. Functionally, one of the essential components for the initiation of protein synthesis. Stabilizes the binding of IF-2 and IF-3 on the 30S subunit to which N-formylmethionyl-tRNA(fMet) subsequently binds. Helps modulate mRNA selection, yielding the 30S pre-initiation complex (PIC). Upon addition of the 50S ribosomal subunit IF-1, IF-2 and IF-3 are released leaving the mature 70S translation initiation complex. This chain is Translation initiation factor IF-1, chloroplastic, found in Arabidopsis thaliana (Mouse-ear cress).